A 118-amino-acid polypeptide reads, in one-letter code: MPSTGTICSLLLLSVLLMADLAMAGSSFLSPEHQKVQQRKESKKPAAKLKPRALEGWLGPEDSGEVEGTEDKLEIRFNAPCDVGIKLSGAQSDQHGQPLGKFLQDILWEEVTEAPADK.

The signal sequence occupies residues Met1 to Ala24. Residue Ser27 is the site of O-decanoyl serine; alternate attachment. Residue Ser27 is the site of O-hexanoyl serine; alternate attachment. A lipid anchor (O-octanoyl serine; alternate) is attached at Ser27. The segment at Leu29–Lys50 is disordered. The segment covering Glu32–Lys44 has biased composition (basic and acidic residues). Positions Ala53–Arg76 are cleaved as a propeptide — removed in mature form. The residue at position 99 (Leu99) is a Leucine amide. The propeptide at Gly100 to Lys118 is removed in mature form.

This sequence belongs to the motilin family. Post-translationally, O-octanoylated by GOAT/MBOAT4. O-octanoylation is essential for ghrelin activity. In terms of processing, amidation of Leu-99 is essential for obestatin activity.

The protein resides in the secreted. Functionally, ghrelin is the ligand for growth hormone secretagogue receptor type 1 (GHSR). Induces the release of growth hormone from the pituitary. Has an appetite-stimulating effect, induces adiposity and stimulates gastric acid secretion. Involved in growth regulation. Its function is as follows. Obestatin may be the ligand for GPR39. May have an appetite-reducing effect resulting in decreased food intake. May reduce gastric emptying activity and jejunal motility. This Sus scrofa (Pig) protein is Appetite-regulating hormone (GHRL).